Reading from the N-terminus, the 131-residue chain is Translation initiation factor 5A (131 aa).

Lysine 36 carries the hypusine modification.

The protein belongs to the eIF-5A family.

The protein resides in the cytoplasm. Functions by promoting the formation of the first peptide bond. In Metallosphaera sedula (strain ATCC 51363 / DSM 5348 / JCM 9185 / NBRC 15509 / TH2), this protein is Translation initiation factor 5A (eIF5A).